We begin with the raw amino-acid sequence, 178 residues long: Zinc finger CCHC domain-containing protein 10 (178 aa).

Residues 21-38 form a CCHC-type zinc finger; that stretch reads VRCQKCLEFGHWTYECKG. The tract at residues 66–178 is disordered; the sequence is QSIGETNIEK…EPQKKKKKKK (113 aa). Low complexity-rich tracts occupy residues 85-113 and 121-164; these read SVTS…SSSS and SLSS…SSES.

The chain is Zinc finger CCHC domain-containing protein 10 (Zcchc10) from Mus musculus (Mouse).